We begin with the raw amino-acid sequence, 188 residues long: MMPTGNFDLNEVKRRMQGAVQSLKHELGGLRTGRASASMLDPVQVEAYGSHMPLNQLATVSVPEPRLISVQVWDKSMVKAVEKAIVDSNLGLSPATEGQVLRLRIPELNEERRKELVKVAHKYAEAAKVAARHVRRDGLDVLKKLEKNHEMSEDDQKRHADEVQKVTDGTIAEIDQLLAAKEKEILTV.

This sequence belongs to the RRF family.

Its subcellular location is the cytoplasm. Its function is as follows. Responsible for the release of ribosomes from messenger RNA at the termination of protein biosynthesis. May increase the efficiency of translation by recycling ribosomes from one round of translation to another. The sequence is that of Ribosome-recycling factor from Bradyrhizobium diazoefficiens (strain JCM 10833 / BCRC 13528 / IAM 13628 / NBRC 14792 / USDA 110).